A 338-amino-acid chain; its full sequence is Lipoate-protein ligase A (338 aa).

One can recognise a BPL/LPL catalytic domain in the interval 29-216 (PTTQRVLFLW…AFFDYFGEQC (188 aa)). ATP is bound by residues Arg71, 76-79 (GAVF), and Lys134. Position 134 (Lys134) interacts with (R)-lipoate.

It belongs to the LplA family. In terms of assembly, monomer.

Its subcellular location is the cytoplasm. The catalysed reaction is L-lysyl-[lipoyl-carrier protein] + (R)-lipoate + ATP = N(6)-[(R)-lipoyl]-L-lysyl-[lipoyl-carrier protein] + AMP + diphosphate + H(+). The protein operates within protein modification; protein lipoylation via exogenous pathway; protein N(6)-(lipoyl)lysine from lipoate: step 1/2. It functions in the pathway protein modification; protein lipoylation via exogenous pathway; protein N(6)-(lipoyl)lysine from lipoate: step 2/2. In terms of biological role, catalyzes both the ATP-dependent activation of exogenously supplied lipoate to lipoyl-AMP and the transfer of the activated lipoyl onto the lipoyl domains of lipoate-dependent enzymes. The sequence is that of Lipoate-protein ligase A from Pectobacterium carotovorum subsp. carotovorum (strain PC1).